A 374-amino-acid polypeptide reads, in one-letter code: Hydroxylysine kinase (374 aa).

Asp-228 functions as the Proton acceptor in the catalytic mechanism.

This sequence belongs to the aminoglycoside phosphotransferase family.

Its subcellular location is the cytoplasm. The enzyme catalyses (5R)-5-hydroxy-L-lysine + GTP = (5R)-5-phosphooxy-L-lysine + GDP + H(+). Catalyzes the GTP-dependent phosphorylation of 5-hydroxy-L-lysine. In Xenopus laevis (African clawed frog), this protein is Hydroxylysine kinase (hykk).